A 373-amino-acid chain; its full sequence is MGYMCDFCGEQRSMVYCRSDAACLCLSCDRNVHSANALSKRHSRTLVCERCNAQPASVRCSDERVSLCQNCDWSGHDGKNSTTTSHHKRQTINCYSGCPSSAELSSIWSFCMDLNISSAEESACEQGMGLMTIDEDGTGEKSGVQKINVEQPETSSAAQGMDHSSVPENSSMAKELGVCEDDFNGNLISDEVDLALENYEELFGSAFNSSRYLFEHGGIGSLFEKDEAHEGSMQQPALSNNASADSFMTCRTEPIICYSSKPAHSNISFSGITGESNAGDFQDCGASSMKQLSREPQPWCHPTAQDIIASSHATTRNNAVMRYKEKKKARKFDKRVRYVSRKERADVRRRVKGRFVKSGEAYDYDPMSPTRSY.

Cys-5, Cys-8, Cys-28, His-33, Cys-48, Cys-51, Cys-71, and His-76 together coordinate Zn(2+). The B box-type 1; atypical zinc finger occupies 5–47; the sequence is CDFCGEQRSMVYCRSDAACLCLSCDRNVHSANALSKRHSRTLV. The B box-type 2; atypical zinc finger occupies 48–92; it reads CERCNAQPASVRCSDERVSLCQNCDWSGHDGKNSTTTSHHKRQTI. Residues 152–172 form a disordered region; that stretch reads PETSSAAQGMDHSSVPENSSM. One can recognise a CCT domain in the interval 316–358; it reads RNNAVMRYKEKKKARKFDKRVRYVSRKERADVRRRVKGRFVKS.

It belongs to the CONSTANS family.

It is found in the nucleus. The protein is Zinc finger protein CONSTANS-LIKE 10 (COL10) of Arabidopsis thaliana (Mouse-ear cress).